The sequence spans 272 residues: Orotidine 5'-phosphate decarboxylase (272 aa).

Residue lysine 95 is the Proton donor of the active site.

It belongs to the OMP decarboxylase family. Type 2 subfamily.

It catalyses the reaction orotidine 5'-phosphate + H(+) = UMP + CO2. It functions in the pathway pyrimidine metabolism; UMP biosynthesis via de novo pathway; UMP from orotate: step 2/2. In Bordetella avium (strain 197N), this protein is Orotidine 5'-phosphate decarboxylase.